A 353-amino-acid polypeptide reads, in one-letter code: G-protein coupled estrogen receptor 1 (353 aa).

The Extracellular portion of the chain corresponds to 1-40 (MEEQTTNVIQIYVNGTEQFNASFDFNITDVKESTDTYEFY). Residues 41–61 (IIGLFLSCLYTIFLFPIGFIG) traverse the membrane as a helical segment. Residues 62 to 81 (NILILVVNLNHRERMTIPDL) are Cytoplasmic-facing. A helical transmembrane segment spans residues 82–102 (YFVNLAVADLILVADSLIEVF). Topologically, residues 103–112 (NLNEKYYDYA) are extracellular. Residues 113–133 (VLCTFMSLFLQVNMYSSIFFL) form a helical membrane-spanning segment. A disulfide bridge connects residues Cys115 and Cys192. Residues 134–160 (TWMSFDRYVALTSSMSSSPLRTMQHAK) lie on the Cytoplasmic side of the membrane. The helical transmembrane segment at 161–181 (LSCSLIWMASILATLLPFTIV) threads the bilayer. At 182–202 (QTQHTGEVHFCFANVFEIQWL) the chain is on the extracellular side. A helical membrane pass occupies residues 203–223 (EVTIGFLIPFSIIGLCYSLIV). The Cytoplasmic portion of the chain corresponds to 224 to 245 (RTLMRAQKHKGLWPRRQKALRM). A helical membrane pass occupies residues 246 to 266 (IVVVVLVFFICWLPENVFISI). The Extracellular portion of the chain corresponds to 267-292 (QLLQGTADPSKRTDTTLWHDYPLTGH). Residues 293–313 (IVNLAAFSNSCLNPIIYSFLG) traverse the membrane as a helical segment. At 314-353 (ETFRDKLRLFIKRKASWSVVYRFCNHTLDLQIPVRSESEV) the chain is on the cytoplasmic side.

It belongs to the G-protein coupled receptor 1 family. As to quaternary structure, homodimer. Heterodimer. Expressed in brain regions that are known to control reproduction and sex behavior. Expressed in ovary, muscle and intestine. Expressed in early germ cells of the testis, including the spermatogonia, spermatocytes, and somatic cells such as Sertoli cells.

The protein localises to the nucleus. It is found in the cytoplasm. Its subcellular location is the perinuclear region. It localises to the cytoskeleton. The protein resides in the cytoplasmic vesicle membrane. The protein localises to the cell membrane. It is found in the basolateral cell membrane. Its subcellular location is the endoplasmic reticulum membrane. It localises to the early endosome. The protein resides in the recycling endosome. The protein localises to the golgi apparatus. It is found in the trans-Golgi network. Its subcellular location is the golgi apparatus membrane. It localises to the cell projection. The protein resides in the dendrite. The protein localises to the dendritic spine membrane. It is found in the axon. Its subcellular location is the postsynaptic density. It localises to the mitochondrion membrane. Membrane G-protein coupled estrogen receptor that binds to 17-beta-estradiol (E2) with high affinity, leading to rapid and transient activation of numerous intracellular signaling pathways. Plays a role in the embryonic development of sensory and motor neurons. Specifically induces apoptosis and reduces proliferation of brain cells. Involved in maintenance of meiotic arrest in oocytes. This chain is G-protein coupled estrogen receptor 1 (gper1), found in Danio rerio (Zebrafish).